The chain runs to 244 residues: Krueppel-like factor 9 (244 aa).

Disordered stretches follow at residues 24–51 (VPEH…GDPG) and 79–143 (PSVC…EKRH). Residues 32 to 51 (DAERLRLPEREVTKEHGDPG) are compositionally biased toward basic and acidic residues. The residue at position 122 (serine 122) is a Phosphoserine. The span at 134–143 (KGKHASEKRH) shows a compositional bias: basic residues. C2H2-type zinc fingers lie at residues 143 to 167 (HKCP…YRVH), 173 to 197 (FPCT…YRTH), and 203 to 225 (FRCP…ARRH).

It belongs to the Sp1 C2H2-type zinc-finger protein family. In terms of assembly, interacts with ZZEF1.

The protein resides in the nucleus. In terms of biological role, transcription factor that binds to GC box promoter elements. Selectively activates mRNA synthesis from genes containing tandem repeats of GC boxes but represses genes with a single GC box. Acts as an epidermal circadian transcription factor regulating keratinocyte proliferation. This is Krueppel-like factor 9 (Klf9) from Rattus norvegicus (Rat).